Reading from the N-terminus, the 333-residue chain is Pro-cathepsin H (333 aa).

The first 20 residues, 1–20, serve as a signal peptide directing secretion; that stretch reads MWAALPLLCAGAWLLSTGAT. A propeptide spans 21–95 (activation peptide); the sequence is AELTVNAIEK…AEIKHKFLWS (75 aa). Asn70 and Asn99 each carry an N-linked (GlcNAc...) asparagine glycan. 4 disulfides stabilise this stretch: Cys100–Cys325, Cys136–Cys179, Cys170–Cys212, and Cys270–Cys320. Positions 104–113 are excised as a propeptide; sequence KSNYLRGTGP. Cys139 is an active-site residue. The N-linked (GlcNAc...) asparagine glycan is linked to Asn228. Catalysis depends on residues His279 and Asn299.

It belongs to the peptidase C1 family. Composed of a mini chain and a large chain. The large chain may be split into heavy and light chain. All chains are held together by disulfide bonds. In terms of tissue distribution, widely expressed with highest expression found in non-skeletal tissues. Low levels found in skeletal tissue.

Its subcellular location is the lysosome. The catalysed reaction is Hydrolysis of proteins, acting as an aminopeptidase (notably, cleaving Arg-|-Xaa bonds) as well as an endopeptidase.. In terms of biological role, important for the overall degradation of proteins in lysosomes. The polypeptide is Pro-cathepsin H (Ctsh) (Mus musculus (Mouse)).